The primary structure comprises 324 residues: Tetrachlorobenzoquinone reductase (324 aa).

The FAD-binding FR-type domain maps to 5–107 (VSTIDMTVTQ…VPPANNFALV (103 aa)). The region spanning 238 to 324 (FTVVLARRSG…SKSPRLVLDI (87 aa)) is the 2Fe-2S ferredoxin-type domain. [2Fe-2S] cluster-binding residues include Cys273, Cys278, Cys281, and Cys311.

It belongs to the PDR/VanB family. As to quaternary structure, homotrimer. FMN is required as a cofactor. [2Fe-2S] cluster serves as cofactor.

The catalysed reaction is 2,3,5,6-tetrachlorohydroquinone + NAD(+) + H(+) = 2,3,5,6-tetrachloro-1,4-benzoquinone + NADH. It participates in xenobiotic degradation; pentachlorophenol degradation. Its activity is regulated as follows. In vitro, activated by tetrachlorohydroquinone (TCHQ) at low concentrations and inhibited at high concentrations (above 200 uM). However, PcpD would only be stimulated by tetrachlorohydroquinone (TCHQ) under in vivo conditions due to the toxicity of tetrachlorohydroquinone (TCHQ). Competitively inhibited by pentachlorophenol (PCP) in a concentration-dependent manner. PcpD is regulated by tetrachlorohydroquinone (TCHQ) and pentachlorophenol (PCP) using a mechanism, which maintains tetrachlorobenzoquinone at a level that would neither significantly decrease the biodegradation of pentachlorophenol (PCP) nor cause cytotoxicity in cells. Functionally, involved in the degradation of the xenobiocide pentachlorophenol (PCP). Catalyzes the reduction of tetrachlorobenzoquinone (TCBQ) to yield tetrachlorohydroquinone (TCHQ). Also able to reduce 2,6-dichloroindophenol (DCIP). The chain is Tetrachlorobenzoquinone reductase from Sphingobium chlorophenolicum.